Consider the following 458-residue polypeptide: Ammonium transporter Rh type B (458 aa).

Topologically, residues 1-13 are cytoplasmic; sequence MAGSPSRAAGRRL. Residues 14 to 34 traverse the membrane as a helical segment; it reads QLPLLCLFLQGATAVLFAVFV. Residues 35–61 are Extracellular-facing; that stretch reads RYNHKTDAALWHRGNHSNADNEFYFRY. Asparagine 49 is a glycosylation site (N-linked (GlcNAc...) asparagine). The helical transmembrane segment at 62–82 threads the bilayer; the sequence is PSFQDVHAMVFVGFGFLMVFL. The Cytoplasmic portion of the chain corresponds to 83–86; the sequence is QRYG. Residues 87–107 form a helical membrane-spanning segment; it reads FSSVGFTFLLAAFALQWSTLV. The Extracellular segment spans residues 108 to 124; the sequence is QGFLHSFHSGHIHVGVE. Residues 125-145 form a helical membrane-spanning segment; that stretch reads SMINADFCAGAVLISFGAVLG. Over 146 to 149 the chain is Cytoplasmic; it reads KTGP. A helical membrane pass occupies residues 150 to 170; it reads AQLLLMALLEVVLFGINEFVL. Residues 171-178 are Extracellular-facing; it reads LHLLGVRD. A helical membrane pass occupies residues 179 to 201; the sequence is AGGSMTIHTFGAYFGLVLSRVLY. Residues 202–219 are Cytoplasmic-facing; the sequence is RPQLEKSKHRQGSVYHSD. A helical transmembrane segment spans residues 220–240; the sequence is LFAMIGTIFLWIFWPSFNSAL. The Extracellular segment spans residues 241-251; the sequence is TALGAGQHRTA. Residues 252 to 272 traverse the membrane as a helical segment; the sequence is LNTYYSLAASTLGTFALSALV. The Cytoplasmic portion of the chain corresponds to 273-282; sequence GEDGRLDMVH. The helical transmembrane segment at 283-303 threads the bilayer; that stretch reads IQNAALAGGVVVGTSSEMMLT. A topological domain (extracellular) is located at residue proline 304. The helical transmembrane segment at 305 to 325 threads the bilayer; the sequence is FGALAAGFLAGTVSTLGYKFF. Over 326-346 the chain is Cytoplasmic; that stretch reads TPILESKFKVQDTCGVHNLHG. Residues 347–367 traverse the membrane as a helical segment; that stretch reads MPGVLGALLGVLVAGLATHEA. Topologically, residues 368–393 are extracellular; the sequence is YGDGLESVFPLIAEGQRSATSQAMLQ. Residues 394-414 traverse the membrane as a helical segment; the sequence is LFGLFVTLMFASVGGGLGGLL. The Cytoplasmic portion of the chain corresponds to 415–458; it reads LKLPFLDSPPDSQCYEDQVHWQVPGEHEDEAQRPLRVEEADTQA. The segment at 416–424 is interaction with ANK3; it reads KLPFLDSPP. Positions 429-432 match the Basolateral sorting signal motif; that stretch reads YEDQ. The segment at 439–458 is disordered; the sequence is GEHEDEAQRPLRVEEADTQA. Positions 444–458 are enriched in basic and acidic residues; it reads EAQRPLRVEEADTQA.

The protein belongs to the ammonium transporter (TC 2.A.49) family. Rh subfamily. Interacts (via C-terminus) with ANK2 and ANK3; required for targeting to the basolateral membrane. In terms of processing, N-glycosylated.

It localises to the cell membrane. Its subcellular location is the basolateral cell membrane. The enzyme catalyses NH4(+)(in) = NH4(+)(out). It catalyses the reaction methylamine(out) = methylamine(in). It carries out the reaction CO2(out) = CO2(in). Functionally, ammonium transporter involved in the maintenance of acid-base homeostasis. Transports ammonium and its related derivative methylammonium across the basolateral plasma membrane of epithelial cells likely contributing to renal transepithelial ammonia transport and ammonia metabolism. May transport either NH4(+) or NH3 ammonia species predominantly mediating an electrogenic NH4(+) transport. May act as a CO2 channel providing for renal acid secretion. In Macaca mulatta (Rhesus macaque), this protein is Ammonium transporter Rh type B (RHBG).